Reading from the N-terminus, the 58-residue chain is Metallothionein-1 (58 aa).

Positions 1 to 28 are beta; it reads PGPCCNDKCVCKEGGCKEGCQCTSCRCS. 18 residues coordinate a divalent metal cation: C4, C5, C9, C11, C16, C20, C22, C25, C27, C30, C33, C37, C39, C45, C49, C53, C55, and C56. The segment at 29–58 is alpha; that stretch reads PCEKCSSGCKCANKEECSKTCSKACSCCPT.

The protein belongs to the metallothionein superfamily. Type 3 family.

Its function is as follows. Metallothioneins have a high content of cysteine residues that bind various heavy metals. Class I MTS in marine crustacea are involved in the sequestration of elevated levels of heavy-metal ions. This Scylla serrata (Mud crab) protein is Metallothionein-1.